The sequence spans 260 residues: Proteasome subunit alpha type-1 (260 aa).

The disordered stretch occupies residues 231-260 (FLEGLEERPQRKPALPADEPAEKAEEPMEH). The span at 250–260 (PAEKAEEPMEH) shows a compositional bias: basic and acidic residues.

The protein belongs to the peptidase T1A family. As to quaternary structure, the 26S proteasome consists of a 20S proteasome core and two 19S regulatory subunits. The 20S proteasome core is a barrel-shaped complex made of 28 subunits that are arranged in four stacked rings. The two outer rings are each formed by seven alpha subunits, and the two inner rings are formed by seven beta subunits. The proteolytic activity is exerted by three beta-subunits PSMB5, PSMB6 and PSMB7.

The protein resides in the cytoplasm. It is found in the nucleus. Functionally, component of the 20S core proteasome complex involved in the proteolytic degradation of most intracellular proteins. This complex plays numerous essential roles within the cell by associating with different regulatory particles. Associated with two 19S regulatory particles, forms the 26S proteasome and thus participates in the ATP-dependent degradation of ubiquitinated proteins. The 26S proteasome plays a key role in the maintenance of protein homeostasis by removing misfolded or damaged proteins that could impair cellular functions, and by removing proteins whose functions are no longer required. Associated with the PA200 or PA28, the 20S proteasome mediates ubiquitin-independent protein degradation. This type of proteolysis is required in several pathways including spermatogenesis (20S-PA200 complex) or generation of a subset of MHC class I-presented antigenic peptides (20S-PA28 complex). This is Proteasome subunit alpha type-1 (PSMA1) from Gallus gallus (Chicken).